A 423-amino-acid polypeptide reads, in one-letter code: Glutamyl-tRNA reductase (423 aa).

Substrate is bound by residues 49–52 (TCNR), S106, 111–113 (EPQ), and Q117. C50 (nucleophile) is an active-site residue. NADP(+) is bound at residue 186 to 191 (GAGDTS).

It belongs to the glutamyl-tRNA reductase family. As to quaternary structure, homodimer.

The catalysed reaction is (S)-4-amino-5-oxopentanoate + tRNA(Glu) + NADP(+) = L-glutamyl-tRNA(Glu) + NADPH + H(+). It functions in the pathway porphyrin-containing compound metabolism; protoporphyrin-IX biosynthesis; 5-aminolevulinate from L-glutamyl-tRNA(Glu): step 1/2. Catalyzes the NADPH-dependent reduction of glutamyl-tRNA(Glu) to glutamate 1-semialdehyde (GSA). The protein is Glutamyl-tRNA reductase of Idiomarina loihiensis (strain ATCC BAA-735 / DSM 15497 / L2-TR).